The primary structure comprises 349 residues: MLIAQRPTLIEDPISEFRSRFVIEPLEPGFGYTLGNSLRRTLLSSIPGASVTSIRIDGVLHEFSTVPGVKEDVTDLILNLKELVVSSDNDEPTVMYLRKQGPGEVTAADIAPPAGVEVHNPELRLATLNDKGKLEIELTVERGRGYVSAAQNKQAGQEIGRIPIDSIYSPVLKVTYKVEATRVEQRTDFDRLIVDVETKPSISPRDAMASAGKTLVGLFGLAQELNAEAEGVDIGPSAADAALAADLALPIEEMDLTVRSYNCLKREGIHTIGELVSRSEADLLDIRNFGQKSIDEVKTKLGAMGLQLKDSPPGFDPRQAVDTYGTDAYSPSFSDPSDDGAEFIETEQY.

The alpha N-terminal domain (alpha-NTD) stretch occupies residues 1–226 (MLIAQRPTLI…GLFGLAQELN (226 aa)). An alpha C-terminal domain (alpha-CTD) region spans residues 241–349 (AALAADLALP…GAEFIETEQY (109 aa)). Positions 309 to 349 (KDSPPGFDPRQAVDTYGTDAYSPSFSDPSDDGAEFIETEQY) are disordered. Acidic residues predominate over residues 336-349 (PSDDGAEFIETEQY).

This sequence belongs to the RNA polymerase alpha chain family. Homodimer. The RNAP catalytic core consists of 2 alpha, 1 beta, 1 beta' and 1 omega subunit. When a sigma factor is associated with the core the holoenzyme is formed, which can initiate transcription.

The catalysed reaction is RNA(n) + a ribonucleoside 5'-triphosphate = RNA(n+1) + diphosphate. In terms of biological role, DNA-dependent RNA polymerase catalyzes the transcription of DNA into RNA using the four ribonucleoside triphosphates as substrates. The protein is DNA-directed RNA polymerase subunit alpha of Frankia casuarinae (strain DSM 45818 / CECT 9043 / HFP020203 / CcI3).